A 396-amino-acid chain; its full sequence is NADH-quinone oxidoreductase subunit D 1 (396 aa).

This sequence belongs to the complex I 49 kDa subunit family. In terms of assembly, NDH-1 is composed of 14 different subunits. Subunits NuoB, C, D, E, F, and G constitute the peripheral sector of the complex.

The protein localises to the cell inner membrane. It catalyses the reaction a quinone + NADH + 5 H(+)(in) = a quinol + NAD(+) + 4 H(+)(out). Functionally, NDH-1 shuttles electrons from NADH, via FMN and iron-sulfur (Fe-S) centers, to quinones in the respiratory chain. The immediate electron acceptor for the enzyme in this species is believed to be ubiquinone. Couples the redox reaction to proton translocation (for every two electrons transferred, four hydrogen ions are translocated across the cytoplasmic membrane), and thus conserves the redox energy in a proton gradient. The polypeptide is NADH-quinone oxidoreductase subunit D 1 (Rhizobium etli (strain CIAT 652)).